A 118-amino-acid chain; its full sequence is Iron-sulfur cluster insertion protein ErpA (118 aa).

The iron-sulfur cluster site is built by C46, C110, and C112.

It belongs to the HesB/IscA family. In terms of assembly, homodimer. Iron-sulfur cluster serves as cofactor.

Functionally, required for insertion of 4Fe-4S clusters for at least IspG. This Psychromonas ingrahamii (strain DSM 17664 / CCUG 51855 / 37) protein is Iron-sulfur cluster insertion protein ErpA.